The primary structure comprises 243 residues: Probable sentrin-specific protease 8 (243 aa).

The tract at residues 12–185 is protease; the sequence is SAIYQSDINI…LYVLSIIEEL (174 aa). Catalysis depends on residues His109 and Asp126. Cys174 serves as the catalytic Nucleophile.

Belongs to the peptidase C48 family.

Protease that catalyzes two essential functions in the nedd8 pathway: processing of full-length nedd8 to its mature form and deconjugation of nedd8 from targeted proteins. This is Probable sentrin-specific protease 8 (senp8) from Dictyostelium discoideum (Social amoeba).